The following is a 60-amino-acid chain: Potassium channel toxin alpha-KTx 3.16 (60 aa).

The N-terminal stretch at 1–23 (MKVFSAVLIILFVCSMIIGISEG) is a signal peptide. Intrachain disulfides connect C30–C50, C36–C55, and C40–C57.

Belongs to the short scorpion toxin superfamily. Potassium channel inhibitor family. Alpha-KTx 03 subfamily. Expressed by the venom gland.

The protein resides in the secreted. In terms of biological role, potassium channel inhibitor. This Mesobuthus gibbosus (Mediterranean checkered scorpion) protein is Potassium channel toxin alpha-KTx 3.16.